Here is a 348-residue protein sequence, read N- to C-terminus: 3'-dehydrocarminate deglycosidase alpha subunit (348 aa).

Residue Glu145 participates in Mg(2+) binding. His147 functions as the Proton acceptor in the catalytic mechanism. Residues Asp177, His275, and Glu311 each contribute to the Mg(2+) site.

This sequence belongs to the C-glycoside deglycosidase alpha subunit family. In terms of assembly, heterodimer composed of an alpha subunit (CarB) and a beta subunit (CarC). Mg(2+) is required as a cofactor.

It carries out the reaction 3'-dehydrocarminate + H(+) = kermesate + 1,5-anhydro-D-erythro-hex-1-en-3-ulose. Its activity is regulated as follows. Activity is strongly reduced in the presence of chelating agents. Carbon-carbon bond-cleaving enzyme which participates in a carminate degradation pathway. Cleaves the C-C bond in 3'-dehydrocarminate to form kermesate. Also shows weak activity with other C-glycosides, such as 3''-dehydropuerarin (3''-oxo-puerarin), 3''-dehydroisoorientin (3''-oxo-homoorientin) and 3'-dehydromangiferin (3'-oxo-mangiferin). The protein is 3'-dehydrocarminate deglycosidase alpha subunit of Microbacterium sp.